The sequence spans 159 residues: Cyclic pyranopterin monophosphate synthase (159 aa).

Residues 76-78 (LCH) and 114-115 (ME) each bind substrate. The active site involves D129.

The protein belongs to the MoaC family. In terms of assembly, homohexamer; trimer of dimers.

The enzyme catalyses (8S)-3',8-cyclo-7,8-dihydroguanosine 5'-triphosphate = cyclic pyranopterin phosphate + diphosphate. Its pathway is cofactor biosynthesis; molybdopterin biosynthesis. Its function is as follows. Catalyzes the conversion of (8S)-3',8-cyclo-7,8-dihydroguanosine 5'-triphosphate to cyclic pyranopterin monophosphate (cPMP). The polypeptide is Cyclic pyranopterin monophosphate synthase (Shewanella oneidensis (strain ATCC 700550 / JCM 31522 / CIP 106686 / LMG 19005 / NCIMB 14063 / MR-1)).